The sequence spans 210 residues: Oxygen-insensitive NADPH nitroreductase (210 aa).

150 to 155 (GVSLMG) lines the NADP(+) pocket.

This sequence belongs to the nitroreductase family.

Functionally, reduction of a variety of nitroaromatic compounds using NADPH as source of reducing equivalents; two electrons are transferred. Capable of reducing metronidazole; inactive RdxA renders the bacterium resistant to this compound. The reduction of metronidazole generates hydroxylamine, a potent mutagen and bactericide. The polypeptide is Oxygen-insensitive NADPH nitroreductase (rdxA) (Helicobacter pylori (strain ATCC 700392 / 26695) (Campylobacter pylori)).